A 155-amino-acid polypeptide reads, in one-letter code: 6,7-dimethyl-8-ribityllumazine synthase (155 aa).

5-amino-6-(D-ribitylamino)uracil is bound by residues Phe-23, 57–59 (AFE), and 81–83 (AVI). A (2S)-2-hydroxy-3-oxobutyl phosphate-binding site is contributed by 86-87 (ST). His-89 (proton donor) is an active-site residue. Phe-114 contacts 5-amino-6-(D-ribitylamino)uracil. Arg-128 contacts (2S)-2-hydroxy-3-oxobutyl phosphate.

The protein belongs to the DMRL synthase family.

The enzyme catalyses (2S)-2-hydroxy-3-oxobutyl phosphate + 5-amino-6-(D-ribitylamino)uracil = 6,7-dimethyl-8-(1-D-ribityl)lumazine + phosphate + 2 H2O + H(+). It participates in cofactor biosynthesis; riboflavin biosynthesis; riboflavin from 2-hydroxy-3-oxobutyl phosphate and 5-amino-6-(D-ribitylamino)uracil: step 1/2. Its function is as follows. Catalyzes the formation of 6,7-dimethyl-8-ribityllumazine by condensation of 5-amino-6-(D-ribitylamino)uracil with 3,4-dihydroxy-2-butanone 4-phosphate. This is the penultimate step in the biosynthesis of riboflavin. This is 6,7-dimethyl-8-ribityllumazine synthase from Pelobacter propionicus (strain DSM 2379 / NBRC 103807 / OttBd1).